We begin with the raw amino-acid sequence, 240 residues long: tRNA (guanine-N(7)-)-methyltransferase (240 aa).

Residues Met1–Thr10 show a composition bias toward polar residues. The disordered stretch occupies residues Met1–Arg20. Residues Glu70, Glu95, Asp122, and Asp145 each coordinate S-adenosyl-L-methionine. Residue Asp145 is part of the active site. Residues Lys149, Asp181, and Thr218 to Glu221 each bind substrate.

Belongs to the class I-like SAM-binding methyltransferase superfamily. TrmB family.

The enzyme catalyses guanosine(46) in tRNA + S-adenosyl-L-methionine = N(7)-methylguanosine(46) in tRNA + S-adenosyl-L-homocysteine. It participates in tRNA modification; N(7)-methylguanine-tRNA biosynthesis. Its function is as follows. Catalyzes the formation of N(7)-methylguanine at position 46 (m7G46) in tRNA. This chain is tRNA (guanine-N(7)-)-methyltransferase, found in Pseudomonas putida (strain W619).